The primary structure comprises 398 residues: MTEAPDVDLADGNFYASREARAAYRWMRANQPVFRDRNGLAAASTYQAVIDAERQPELFSNAGGIRPDQPALPMMIDMDDPAHLLRRKLVNAGFTRKRVKDKEASIAALCDTLIDAVCERGECDFVRDLAAPLPMAVIGDMLGVRPEQRDMFLRWSDDLVTFLSSHVSQEDFQITMDAFAAYNDFTRATIAARRADPTDDLVSVLVSSEVDGERLSDDELVMETLLILIGGDETTRHTLSGGTEQLLRNRDQWDLLQRDPSLLPGAIEEMLRWTAPVKNMCRVLTADTEFHGTALCAGEKMMLLFESANFDEAVFCEPEKFDVQRNPNSHLAFGFGTHFCLGNQLARLELSLMTERVLRRLPDLRLVADDSVLPLRPANFVSGLESMPVVFTPSPPLG.

Residue Cys340 participates in heme binding.

It belongs to the cytochrome P450 family. It depends on heme as a cofactor.

The catalysed reaction is cholest-4-en-3-one + 6 reduced [2Fe-2S]-[ferredoxin] + 3 O2 + 5 H(+) = (25R)-3-oxocholest-4-en-26-oate + 6 oxidized [2Fe-2S]-[ferredoxin] + 4 H2O. The enzyme catalyses cholest-4-en-3-one + 2 reduced [2Fe-2S]-[ferredoxin] + O2 + 2 H(+) = (25R)-3-oxocholest-4-en-26-ol + 2 oxidized [2Fe-2S]-[ferredoxin] + H2O. It carries out the reaction (25R)-3-oxocholest-4-en-26-ol + 2 reduced [2Fe-2S]-[ferredoxin] + O2 + 2 H(+) = (25R)-3-oxocholest-4-en-26-al + 2 oxidized [2Fe-2S]-[ferredoxin] + 2 H2O. It catalyses the reaction (25R)-3-oxocholest-4-en-26-al + 2 reduced [2Fe-2S]-[ferredoxin] + O2 + H(+) = (25R)-3-oxocholest-4-en-26-oate + 2 oxidized [2Fe-2S]-[ferredoxin] + H2O. The catalysed reaction is cholesterol + NADPH + O2 + H(+) = 26-hydroxycholesterol + NADP(+) + H2O. The enzyme catalyses 26-hydroxycholesterol + 2 reduced [2Fe-2S]-[ferredoxin] + O2 + 2 H(+) = (3beta)-hydroxy-cholest-5-en-26-al + 2 oxidized [2Fe-2S]-[ferredoxin] + 2 H2O. It carries out the reaction (3beta)-hydroxy-cholest-5-en-26-al + NADPH + O2 = (3beta)-hydroxy-cholest-5-en-26-oate + NADP(+) + H2O. It catalyses the reaction (25S)-3-oxocholest-4-en-26-ol + 2 reduced [2Fe-2S]-[ferredoxin] + O2 + 2 H(+) = (25S)-3-oxocholest-4-en-26-al + 2 oxidized [2Fe-2S]-[ferredoxin] + 2 H2O. The catalysed reaction is (25S)-3-oxocholest-4-en-26-al + 2 reduced [2Fe-2S]-[ferredoxin] + O2 + H(+) = (25S)-3-oxocholest-4-en-26-oate + 2 oxidized [2Fe-2S]-[ferredoxin] + H2O. The protein operates within steroid metabolism; cholesterol degradation. Inhibited by econazole, clotrimazole and miconazole. In terms of biological role, involved in the utilization of cholesterol as the sole carbon and energy source by degrading the side chain during infection. Primarily catalyzes the sequential oxidation of the terminal methyl of cholest-4-en-3-one into (25R)-26-hydroxycholest-4-en-3-one (alcohol), (25R)-26-oxocholest-4-en-3-one (aldehyde), to finally yield the carboxylic acid (25R)-3-oxocholest-4-en-26-oate. In vitro, Cyp142 catalyzes with equal preference the oxidation of both (25R)- and (25S)-26-hydroxycholest-4-en-3-one diastereomers to the corresponding carboxylic acid which is a prerequisite for entry into the beta-oxidation pathway. Also able to sequentially oxidize cholesterol itself, not only cholest-4-en-3-one. This is Steroid C26-monooxygenase (cyp142) from Mycobacterium tuberculosis (strain ATCC 25618 / H37Rv).